The primary structure comprises 472 residues: FAD-dependent monooxygenase dpmaE (472 aa).

An N-terminal signal peptide occupies residues 1–24; sequence MSQRQFKVIIIGGSVTGLTLAHSL. Residues glutamate 35, glycine 49, and arginine 108 each contribute to the FAD site. Asparagine 128 and asparagine 179 each carry an N-linked (GlcNAc...) asparagine glycan. FAD contacts are provided by aspartate 305 and alanine 318. Asparagine 369 is a glycosylation site (N-linked (GlcNAc...) asparagine). Residues 440 to 460 traverse the membrane as a helical segment; it reads LLPLMFTLPLLYFGLSWIVGI.

Belongs to the paxM FAD-dependent monooxygenase family. FAD serves as cofactor.

The protein localises to the membrane. It participates in secondary metabolite biosynthesis; terpenoid biosynthesis. In terms of biological role, FAD-dependent monooxygenase; part of the gene cluster that mediates the biosynthesis of the diterpenoid pyrones subglutinols A and B. The first step of the pathway is the synthesis of the alpha-pyrone moiety by the polyketide synthase dpmaA via condensation of one acetyl-CoA starter unit with 3 malonyl-CoA units and 2 methylations. The alpha-pyrone is then combined with geranylgeranyl pyrophosphate (GGPP) formed by the GGPP synthase dpmaD through the action of the prenyltransferase dpmaC to yield a linear alpha-pyrone diterpenoid. Subsequent steps in the diterpenoid pyrone biosynthetic pathway involve the decalin core formation, which is initiated by the epoxidation of the C10-C11 olefin by the FAD-dependent oxidoreductase dpmaE, and is followed by a cyclization cascade catalyzed by the terpene cyclase dpmaB. The dehydrogenase dpmaF is then involved in tetrahydrofuran (THF) ring formation at the C5 unit to complete the formation of subglutinols A and B. In Metarhizium anisopliae (Entomophthora anisopliae), this protein is FAD-dependent monooxygenase dpmaE.